The chain runs to 308 residues: Acetyl-coenzyme A carboxylase carboxyl transferase subunit beta (308 aa).

A CoA carboxyltransferase N-terminal domain is found at leucine 26 to leucine 295.

This sequence belongs to the AccD/PCCB family. As to quaternary structure, acetyl-CoA carboxylase is a heterohexamer composed of biotin carboxyl carrier protein (AccB), biotin carboxylase (AccC) and two subunits each of ACCase subunit alpha (AccA) and ACCase subunit beta (AccD).

The protein localises to the cytoplasm. The catalysed reaction is N(6)-carboxybiotinyl-L-lysyl-[protein] + acetyl-CoA = N(6)-biotinyl-L-lysyl-[protein] + malonyl-CoA. The protein operates within lipid metabolism; malonyl-CoA biosynthesis; malonyl-CoA from acetyl-CoA: step 1/1. Functionally, component of the acetyl coenzyme A carboxylase (ACC) complex. Biotin carboxylase (BC) catalyzes the carboxylation of biotin on its carrier protein (BCCP) and then the CO(2) group is transferred by the transcarboxylase to acetyl-CoA to form malonyl-CoA. The chain is Acetyl-coenzyme A carboxylase carboxyl transferase subunit beta from Mesorhizobium japonicum (strain LMG 29417 / CECT 9101 / MAFF 303099) (Mesorhizobium loti (strain MAFF 303099)).